Consider the following 472-residue polypeptide: UDP-glycosyltransferase 2 (472 aa).

UDP-alpha-D-glucose-binding positions include serine 283, 348–349 (WA), 366–374 (HCGWNSVLE), and 388–391 (YAEQ).

This sequence belongs to the UDP-glycosyltransferase family. As to expression, highly expressed in roots. Expressed in leaves and stems.

In terms of biological role, glycosyltransferase that possesses isoflavonoids 4'-O- and 7-O-glucosyltransferase activities. Shows a successive glucosylation toward the acceptors producing their corresponding 4',7-O-diglucosides. Can use genistein, formononetin, daidzein, liquiritigenin and naringenin as substrates. Also shows a 3'-O-glucosylation activity in vitro. In Pueraria montana var. lobata (Kudzu vine), this protein is UDP-glycosyltransferase 2.